A 269-amino-acid chain; its full sequence is Tryptophan synthase alpha chain (269 aa).

Catalysis depends on proton acceptor residues Glu-50 and Asp-61.

The protein belongs to the TrpA family. Tetramer of two alpha and two beta chains.

The enzyme catalyses (1S,2R)-1-C-(indol-3-yl)glycerol 3-phosphate + L-serine = D-glyceraldehyde 3-phosphate + L-tryptophan + H2O. It functions in the pathway amino-acid biosynthesis; L-tryptophan biosynthesis; L-tryptophan from chorismate: step 5/5. Its function is as follows. The alpha subunit is responsible for the aldol cleavage of indoleglycerol phosphate to indole and glyceraldehyde 3-phosphate. The polypeptide is Tryptophan synthase alpha chain (Francisella tularensis subsp. holarctica (strain FTNF002-00 / FTA)).